The following is a 410-amino-acid chain: LL-diaminopimelate aminotransferase (410 aa).

Substrate is bound by residues Tyr-15 and Gly-42. Pyridoxal 5'-phosphate is bound by residues Tyr-72, 108–109 (AK), Tyr-132, Asn-187, Tyr-218, and 246–248 (SFS). Substrate is bound by residues Lys-109, Tyr-132, and Asn-187. An N6-(pyridoxal phosphate)lysine modification is found at Lys-249. Pyridoxal 5'-phosphate is bound by residues Arg-257 and Asn-292. The substrate site is built by Asn-292 and Arg-388.

Belongs to the class-I pyridoxal-phosphate-dependent aminotransferase family. LL-diaminopimelate aminotransferase subfamily. As to quaternary structure, homodimer. It depends on pyridoxal 5'-phosphate as a cofactor.

The catalysed reaction is (2S,6S)-2,6-diaminopimelate + 2-oxoglutarate = (S)-2,3,4,5-tetrahydrodipicolinate + L-glutamate + H2O + H(+). It participates in amino-acid biosynthesis; L-lysine biosynthesis via DAP pathway; LL-2,6-diaminopimelate from (S)-tetrahydrodipicolinate (aminotransferase route): step 1/1. Its function is as follows. Involved in the synthesis of meso-diaminopimelate (m-DAP or DL-DAP), required for both lysine and peptidoglycan biosynthesis. Catalyzes the direct conversion of tetrahydrodipicolinate to LL-diaminopimelate. Is also able to catalyze the reverse reaction in vitro, i.e. the transamination of LL-diaminopimelate with 2-oxoglutarate to produce 2-oxo-6-aminopimelate (in equilibrium with tetrahydrodipicolinate) and glutamate. Has maximal aminotransferase activity using 2-oxoglutarate as an amino group acceptor, and cannot use oxaloacetate instead of 2-oxoglutarate, although 2-oxoadipate can substitute with 21% relative activity. Cannot use m-DAP, lysine or ornithine as the amino-group donor, when using 2-oxoglutarate as the amino-group acceptor. The protein is LL-diaminopimelate aminotransferase of Methanothermobacter thermautotrophicus (strain ATCC 29096 / DSM 1053 / JCM 10044 / NBRC 100330 / Delta H) (Methanobacterium thermoautotrophicum).